Here is a 117-residue protein sequence, read N- to C-terminus: Large ribosomal subunit protein bL20c (117 aa).

The protein belongs to the bacterial ribosomal protein bL20 family.

The protein localises to the plastid. The protein resides in the chloroplast. Its function is as follows. Binds directly to 23S ribosomal RNA and is necessary for the in vitro assembly process of the 50S ribosomal subunit. It is not involved in the protein synthesizing functions of that subunit. This chain is Large ribosomal subunit protein bL20c, found in Manihot esculenta (Cassava).